A 428-amino-acid chain; its full sequence is Divalent metal cation transporter MntH (428 aa).

11 helical membrane passes run 33 to 53 (WYLLGPAFVAAIAYVDPGNVA), 60 to 80 (AQFGYLLLWVIVAANVMAALV), 114 to 134 (QAEIVAMATDVAEVIGGAIAL), 136 to 156 (IMFNLPLPIGGIITGVVSLLL), 171 to 191 (VITALLLVIAIGFTASFFVVT), 210 to 230 (SVLLAAAIMGATVMPHAVYLH), 258 to 278 (VGLAMLIAGGVNAAMLLVAAL), 299 to 319 (TLGATIAVLFAVGLLASGLAS), 334 to 356 (LLHWSVPMLVRRLITLGPALAIL), 365 to 385 (TLVLSQVVLSFGIPFAVLPLV), and 406 to 426 (VGWVVAVMVSLLNVMLIYLTV).

The protein belongs to the NRAMP family.

It is found in the cell membrane. Its function is as follows. H(+)-stimulated, divalent metal cation uptake system. Transports zinc and iron. Can also interact with manganese and copper. The polypeptide is Divalent metal cation transporter MntH (Mycobacterium tuberculosis (strain CDC 1551 / Oshkosh)).